A 316-amino-acid chain; its full sequence is Apolipoprotein E (316 aa).

The N-terminal stretch at 1–18 is a signal peptide; that stretch reads MKVLWVALVVALLAGCQA. A run of 8 repeats spans residues 79–100, 101–122, 123–144, 145–166, 167–188, 189–210, 211–232, and 233–254. Residues 79-254 are 8 X 22 AA approximate tandem repeats; sequence VLMEETMKEV…RLDKMRQQLE (176 aa). Methionine 142 bears the Methionine sulfoxide mark. Serine 146 carries the phosphoserine modification. The LDL and other lipoprotein receptors binding stretch occupies residues 157–167; sequence HLRKLRKRLLR. Residue 161–164 participates in heparin binding; the sequence is LRKR. A lipid-binding and lipoprotein association region spans residues 209–289; the sequence is AATLSTQAAQ…SWFEPLVGDM (81 aa). Residue threonine 211 is glycosylated (O-linked (GalNAc...) threonine). 228 to 235 is a heparin binding site; it reads RQKLHGRL. Residues 265–316 form a homooligomerization region; that stretch reads SQIRLQAEAFQARLRSWFEPLVGDMQRQWAGLVEKVQLALHLSPTSPPSENH. The segment at 277-289 is specificity for association with VLDL; it reads RLRSWFEPLVGDM.

It belongs to the apolipoprotein A1/A4/E family. Homotetramer. May interact with ABCA1; functionally associated with ABCA1 in the biogenesis of HDLs. May interact with APP/A4 amyloid-beta peptide; the interaction is extremely stable in vitro but its physiological significance is unclear. May interact with MAPT. May interact with MAP2. In the cerebrospinal fluid, interacts with secreted SORL1. Interacts with PMEL; this allows the loading of PMEL luminal fragment on ILVs to induce fibril nucleation. APOE exists as multiple glycosylated and sialylated glycoforms within cells and in plasma. The extent of glycosylation and sialylation are tissue and context specific. Post-translationally, glycated in plasma VLDL. In terms of processing, phosphorylated by FAM20C in the extracellular medium.

The protein localises to the secreted. Its subcellular location is the extracellular space. It is found in the extracellular matrix. It localises to the extracellular vesicle. The protein resides in the endosome. The protein localises to the multivesicular body. Its function is as follows. APOE is an apolipoprotein, a protein associating with lipid particles, that mainly functions in lipoprotein-mediated lipid transport between organs via the plasma and interstitial fluids. APOE is a core component of plasma lipoproteins and is involved in their production, conversion and clearance. Apolipoproteins are amphipathic molecules that interact both with lipids of the lipoprotein particle core and the aqueous environment of the plasma. As such, APOE associates with chylomicrons, chylomicron remnants, very low density lipoproteins (VLDL) and intermediate density lipoproteins (IDL) but shows a preferential binding to high-density lipoproteins (HDL). It also binds a wide range of cellular receptors including the LDL receptor/LDLR and the very low-density lipoprotein receptor/VLDLR that mediate the cellular uptake of the APOE-containing lipoprotein particles. Finally, APOE also has a heparin-binding activity and binds heparan-sulfate proteoglycans on the surface of cells, a property that supports the capture and the receptor-mediated uptake of APOE-containing lipoproteins by cells. The protein is Apolipoprotein E (APOE) of Capra hircus aegagrus (Wild goat).